The sequence spans 212 residues: Ribosomal RNA small subunit methyltransferase G (212 aa).

Residues G80, L85, 131–132 (AE), and R146 each bind S-adenosyl-L-methionine.

This sequence belongs to the methyltransferase superfamily. RNA methyltransferase RsmG family.

Its subcellular location is the cytoplasm. The catalysed reaction is guanosine(527) in 16S rRNA + S-adenosyl-L-methionine = N(7)-methylguanosine(527) in 16S rRNA + S-adenosyl-L-homocysteine. Specifically methylates the N7 position of guanine in position 527 of 16S rRNA. The protein is Ribosomal RNA small subunit methyltransferase G of Xanthomonas axonopodis pv. citri (strain 306).